Reading from the N-terminus, the 425-residue chain is Serine--tRNA ligase (425 aa).

230 to 232 (TAE) provides a ligand contact to L-serine. 261 to 263 (RSE) contributes to the ATP binding site. E284 contributes to the L-serine binding site. 348-351 (EISS) is a binding site for ATP. S384 serves as a coordination point for L-serine.

This sequence belongs to the class-II aminoacyl-tRNA synthetase family. Type-1 seryl-tRNA synthetase subfamily. As to quaternary structure, homodimer. The tRNA molecule binds across the dimer.

It is found in the cytoplasm. The enzyme catalyses tRNA(Ser) + L-serine + ATP = L-seryl-tRNA(Ser) + AMP + diphosphate + H(+). It carries out the reaction tRNA(Sec) + L-serine + ATP = L-seryl-tRNA(Sec) + AMP + diphosphate + H(+). It functions in the pathway aminoacyl-tRNA biosynthesis; selenocysteinyl-tRNA(Sec) biosynthesis; L-seryl-tRNA(Sec) from L-serine and tRNA(Sec): step 1/1. Catalyzes the attachment of serine to tRNA(Ser). Is also able to aminoacylate tRNA(Sec) with serine, to form the misacylated tRNA L-seryl-tRNA(Sec), which will be further converted into selenocysteinyl-tRNA(Sec). The protein is Serine--tRNA ligase of Streptococcus pyogenes serotype M4 (strain MGAS10750).